We begin with the raw amino-acid sequence, 360 residues long: Magnesium-protoporphyrin IX monomethyl ester [oxidative] cyclase (360 aa).

The interval 1-20 (MVPPTAIAEASRSGGEPAIK) is disordered.

This sequence belongs to the AcsF family. The cofactor is Fe cation.

It catalyses the reaction Mg-protoporphyrin IX 13-monomethyl ester + 3 NADPH + 3 O2 + 2 H(+) = 3,8-divinyl protochlorophyllide a + 3 NADP(+) + 5 H2O. It participates in porphyrin-containing compound metabolism; chlorophyll biosynthesis (light-independent). Its function is as follows. Catalyzes the formation of the isocyclic ring in chlorophyll biosynthesis. Mediates the cyclase reaction, which results in the formation of divinylprotochlorophyllide (Pchlide) characteristic of all chlorophylls from magnesium-protoporphyrin IX 13-monomethyl ester (MgPMME). This is Magnesium-protoporphyrin IX monomethyl ester [oxidative] cyclase from Synechococcus sp. (strain RCC307).